We begin with the raw amino-acid sequence, 688 residues long: Phosphoinositide 3-phosphatase (688 aa).

One can recognise a Myotubularin phosphatase domain in the interval 155-637; it reads SWDIYDPIKE…KKVQWWWQLY (483 aa). Catalysis depends on Cys397, which acts as the Phosphocysteine intermediate. A compositionally biased stretch (basic and acidic residues) spans 647 to 668; it reads ELRHKRDSVPISVDKKSKEHSN. Positions 647 to 672 are disordered; sequence ELRHKRDSVPISVDKKSKEHSNSDGG.

It belongs to the protein-tyrosine phosphatase family. Non-receptor class myotubularin subfamily.

It localises to the cytoplasm. It carries out the reaction a 1,2-diacyl-sn-glycero-3-phospho-(1D-myo-inositol-3-phosphate) + H2O = a 1,2-diacyl-sn-glycero-3-phospho-(1D-myo-inositol) + phosphate. Its function is as follows. Lipid phosphatase which dephosphorylates phosphatidylinositol 3-monophosphate (PI3P). Involved in the control of PI3P-dependent signaling and in the maintenance of endosomal system integrity. The polypeptide is Phosphoinositide 3-phosphatase (Saccharomyces cerevisiae (strain ATCC 204508 / S288c) (Baker's yeast)).